We begin with the raw amino-acid sequence, 1032 residues long: Leucine-rich repeat and coiled-coil domain-containing protein 1 (1032 aa).

LRR repeat units follow at residues 44-65, 66-87, 88-109, 110-131, and 136-157; these read TLHA…DHIW, NLQH…NTLT, KLCT…EELI, NLTR…IPLH, and KLRY…LQCM. In terms of domain architecture, LRRCT spans 175–218; the sequence is NPVCRLPGYRAVILQTLPQLRILDCKNIFGEPVNLTEINSSQLQ. Residues 316 to 345 form a disordered region; that stretch reads DNVLEKDPRPKRDTDITSESDYGNRKECNR. Over residues 318-330 the composition is skewed to basic and acidic residues; sequence VLEKDPRPKRDTD. Residues 421–647 adopt a coiled-coil conformation; sequence NTYQSLVEQL…DLENEFRIAL (227 aa).

The protein belongs to the LRRCC1 family.

It localises to the cytoplasm. Its subcellular location is the cytoskeleton. The protein resides in the microtubule organizing center. The protein localises to the centrosome. It is found in the centriole. In terms of biological role, required for the organization of the mitotic spindle. Maintains the structural integrity of centrosomes during mitosis. The chain is Leucine-rich repeat and coiled-coil domain-containing protein 1 (LRRCC1) from Homo sapiens (Human).